Here is a 137-residue protein sequence, read N- to C-terminus: Competence protein ComGG (137 aa).

Residues Gly-10–Leu-30 traverse the membrane as a helical segment. A disordered region spans residues Glu-106–Ser-137.

In terms of assembly, the transformation pili are flexible filaments, consisting mainly of the major pilin ComGC and smaller amounts of the minor pilins, including at least ComGD, ComGF and ComGG, and perhaps ComGE. Interacts with ComGC; the interaction is probably direct. Interacts with ComGD. Interacts with ComGE. Interacts with ComGF. May act as a link between ComGC, ComGD and ComGF.

It localises to the fimbrium. Its subcellular location is the cell membrane. Required for formation of the type IV-like pilus (T4P) that plays a role in transformation. Transformation pili are dynamically extended and retracted, perhaps thereby promoting DNA uptake and transformation. Required for transformation. The protein is Competence protein ComGG of Streptococcus pneumoniae (strain ATCC BAA-255 / R6).